Here is a 523-residue protein sequence, read N- to C-terminus: Mitochondrial distribution and morphology protein 12 (523 aa).

Residues 1 to 483 (MSFDINWEKL…WPSWICVDMA (483 aa)) enclose the SMP-LTD domain. The segment covering 108 to 117 (HEADIINDHD) has biased composition (basic and acidic residues). 4 disordered regions span residues 108–160 (HEAD…QYDE), 178–213 (SAST…PFQS), 270–313 (KTKE…NAKN), and 483–523 (AEND…KKED). 2 stretches are compositionally biased toward acidic residues: residues 118 to 140 (YGDE…DDEN) and 148 to 158 (EDEENEESSQY). 2 stretches are compositionally biased toward polar residues: residues 178 to 187 (SASTPKRTSP) and 277 to 288 (SGDQQQGKQTGK). A compositionally biased stretch (basic and acidic residues) spans 289-313 (ANEKGQKHKHEHEEEQGSDKQNAKN). The segment covering 483 to 501 (AENDDEEEDDDDDDHDEDN) has biased composition (acidic residues). Residues 502 to 523 (EGRGRMRDTGDVDVRDHDKKED) are compositionally biased toward basic and acidic residues.

The protein belongs to the MDM12 family. As to quaternary structure, component of the ER-mitochondria encounter structure (ERMES) or MDM complex, composed of MMM1, MDM10, MDM12 and MDM34. An MMM1 homodimer associates with one molecule of MDM12 on each side in a pairwise head-to-tail manner, and the SMP-LTD domains of MMM1 and MDM12 generate a continuous hydrophobic tunnel for phospholipid trafficking.

The protein resides in the mitochondrion outer membrane. It localises to the endoplasmic reticulum membrane. Functionally, component of the ERMES/MDM complex, which serves as a molecular tether to connect the endoplasmic reticulum (ER) and mitochondria. Components of this complex are involved in the control of mitochondrial shape and protein biogenesis, and function in nonvesicular lipid trafficking between the ER and mitochondria. MDM12 is required for the interaction of the ER-resident membrane protein MMM1 and the outer mitochondrial membrane-resident beta-barrel protein MDM10. The MDM12-MMM1 subcomplex functions in the major beta-barrel assembly pathway that is responsible for biogenesis of all mitochondrial outer membrane beta-barrel proteins, and acts in a late step after the SAM complex. The MDM10-MDM12-MMM1 subcomplex further acts in the TOM40-specific pathway after the action of the MDM12-MMM1 complex. Essential for establishing and maintaining the structure of mitochondria and maintenance of mtDNA nucleoids. This chain is Mitochondrial distribution and morphology protein 12, found in Lodderomyces elongisporus (strain ATCC 11503 / CBS 2605 / JCM 1781 / NBRC 1676 / NRRL YB-4239) (Yeast).